A 146-amino-acid polypeptide reads, in one-letter code: Ribonuclease H (146 aa).

Positions 1 to 136 (MKHIEIYTDG…CDTLAREAAL (136 aa)) constitute an RNase H type-1 domain. The Mg(2+) site is built by D9, E47, D69, and D128.

Belongs to the RNase H family. Monomer. Requires Mg(2+) as cofactor.

The protein localises to the cytoplasm. It catalyses the reaction Endonucleolytic cleavage to 5'-phosphomonoester.. Functionally, endonuclease that specifically degrades the RNA of RNA-DNA hybrids. The polypeptide is Ribonuclease H (Campylobacter jejuni subsp. jejuni serotype O:23/36 (strain 81-176)).